The chain runs to 365 residues: Dehydroprecondylocarpine acetate synthase (365 aa).

The Zn(2+) site is built by Cys105, Cys108, Cys111, and Cys119. N-linked (GlcNAc...) asparagine glycosylation is found at Asn142 and Asn147. The NADP(+) site is built by Leu194, Gly196, Leu197, Ser216, Thr217, Thr218, Lys221, Leu279, Ala281, Ser303, Ala305, and Arg350.

It belongs to the zinc-containing alcohol dehydrogenase family. In terms of assembly, homodimer. Interaction with catharanthine synthase (CS) and tabersonine synthase (TS). It depends on Zn(2+) as a cofactor.

It localises to the cytoplasm. It is found in the cytosol. The enzyme catalyses dihydroprecondylocarpine acetate + NADP(+) = precondylocarpine acetate + NADPH + H(+). The protein operates within alkaloid biosynthesis. Component of the seco-iridoid and derivatives monoterpenoid indole alkaloids (MIAs, e.g. vinblastine, catharanthine, tabersonine, vincadifformine, vindoline, vincristine, quinine and strychnine) biosynthesis pathway. Catalyzes the non-canonical 1,4-reduction of an alpha,beta-unsaturated iminium moiety; by contrast with the classic alcohol dehydrogenase mechanism, this reaction does not require a catalytic zinc or proton relay. Converts precondylocarpine acetate to dihydroprecondylocarpine acetate, that is spontaneously converted into dehydrosecodine intermediate, precursor of angryline. May also trigger the non-stereoselective 1,4-reduction reaction at C15 of dehydrosecodine leading to the production of secodine, a precursor of vincadifformine. The chain is Dehydroprecondylocarpine acetate synthase from Catharanthus roseus (Madagascar periwinkle).